The chain runs to 1444 residues: Probable chitinase LysM18 (1444 aa).

LysM domains follow at residues 256 to 302 (STVQ…HFCC) and 321 to 369 (TTYT…IICL). The Chitin-binding type-1 domain occupies 382 to 450 (NAECGPQVPG…TNGCISNCGT (69 aa)). 4 cysteine pairs are disulfide-bonded: C385-C413, C407-C419, C412-C426, and C444-C448. In terms of domain architecture, GH18 spans 461 to 831 (YRKVGFYEGF…STSWTKFTSD (371 aa)). E582 (proton donor) is an active-site residue. Residues Y583 and W808 each coordinate chitin.

Belongs to the glycosyl hydrolase 18 family. Chitinase class V subfamily.

It carries out the reaction Random endo-hydrolysis of N-acetyl-beta-D-glucosaminide (1-&gt;4)-beta-linkages in chitin and chitodextrins.. Probable chitinase involved in the degradation of chitin, a component of the cell walls of fungi and exoskeletal elements of some animals (including worms and arthropods). Might be involved in manipulation of host defenses for successful infection. The sequence is that of Probable chitinase LysM18 from Penicillium expansum (Blue mold rot fungus).